Consider the following 322-residue polypeptide: Cysteine protease YopT (322 aa).

Catalysis depends on residues Cys139, His258, and Asp274.

The protein belongs to the peptidase C58 family. In terms of assembly, interacts with human ARHA.

Its subcellular location is the secreted. Cysteine protease, which is translocated into infected cells and plays a central role in pathogenesis by cleaving the C-terminus end of the human small GTPase RhoA/ARHA, a regulator of cytoskeleton. Once cleaved, ARHA loses its lipid modification, and is released from the cell membrane, leading to the subsequent disruption of actin cytoskeleton of the host cell. This Yersinia pseudotuberculosis serotype I (strain IP32953) protein is Cysteine protease YopT (yopT).